The primary structure comprises 225 residues: PKHD-type hydroxylase Smal_0990 (225 aa).

Residues lysine 78–serine 177 enclose the Fe2OG dioxygenase domain. Fe cation contacts are provided by histidine 96, aspartate 98, and histidine 158. Arginine 168 lines the 2-oxoglutarate pocket.

Requires Fe(2+) as cofactor. The cofactor is L-ascorbate.

In Stenotrophomonas maltophilia (strain R551-3), this protein is PKHD-type hydroxylase Smal_0990.